The following is a 321-amino-acid chain: Glucokinase (321 aa).

8 to 13 provides a ligand contact to ATP; the sequence is GDVGGT.

It belongs to the bacterial glucokinase family.

Its subcellular location is the cytoplasm. The enzyme catalyses D-glucose + ATP = D-glucose 6-phosphate + ADP + H(+). In Salmonella paratyphi B (strain ATCC BAA-1250 / SPB7), this protein is Glucokinase.